The primary structure comprises 165 residues: MISVATAECFTHGKIGVKIHKMACGYKEVEKDPNYSIINGNVFVMASMFLPSKKGIESLLDVKLPEPDYVFKYSKAYTQENDILVAKIVANALKNKLNCDIAISSTAGIGNGAICILTDKKEYNFTSEVYGDLIKGENILKRQENGINKAFDTVIEILKKEYGLK.

The protein belongs to the UPF0254 family.

In Methanococcus maripaludis (strain C7 / ATCC BAA-1331), this protein is UPF0254 protein MmarC7_0182.